Consider the following 214-residue polypeptide: GTP-binding nuclear protein GSP1 (214 aa).

Residues Arg-4–Arg-172 form the Small GTPase Ran-type domain. Gly-17–Thr-22 lines the GTP pocket. Positions Lys-34–Ala-42 are switch-I. Residues Gly-66, Asn-121–Asp-124, and Ser-151–Lys-153 contribute to the GTP site. Residues Gly-66–Ser-82 are switch-II.

The protein belongs to the small GTPase superfamily. Ran family. As to quaternary structure, found in a nuclear export complex with RanGTP, exportin and pre-miRNA.

It localises to the nucleus. Its function is as follows. GTP-binding protein involved in nucleocytoplasmic transport. Required for the import of protein into the nucleus and also for RNA export. This chain is GTP-binding nuclear protein GSP1 (GSP1), found in Encephalitozoon cuniculi (strain GB-M1) (Microsporidian parasite).